Consider the following 32-residue polypeptide: Alpha-conotoxin RgIA (32 aa).

The propeptide occupies 1-19 (SNKRKNAAMLDMIAQHAIR). 2 cysteine pairs are disulfide-bonded: C21/C27 and C22/C31.

This sequence belongs to the conotoxin A superfamily. Post-translationally, the disulfide bond CysI-CysIII is important for alpha-9-alpha-10 subtype inhibition, whereas the bond CysII-CysIV contributes to GABA(B) modulation. In terms of tissue distribution, expressed by the venom duct.

The protein localises to the secreted. In terms of biological role, this toxin target two types of receptors, the nicotinic acetylcholine receptor (nAChR) and the G-protein-coupled receptor GABA(B). It specifically inhibits the alpha-9-alpha-10/CHRNA9-CHRNA10 nAChR, with preference for rat receptors. It interacts with the alpha-10(+)/alpha-9(-)interface of the receptor. It shows a two order of magnitude species difference potency for the rat versus human alpha-9-alpha-10 nAChR, due to the Thr-86 located in the alpha-9 nAChR subunit. This toxin also shows inhibition of high voltage-activated (HVA) calcium channels (Cav2.2) by acting on GABA(B) receptors (GABBR1 and GABBR2). In vivo, this toxin produces an acute antinociceptive effect in peripheral nerve-injured rats, which may be related to the inhibition of immune cell buildup at the site of nerve injury. In addition, when intramuscularly injected into rats following chronic constriction injury of the sciatic nerve, this toxin protects peripheral nervous tissues as well as prevents central maladaptive plasticity by inhibiting glial cell activation. This is Alpha-conotoxin RgIA from Conus regius (Crown cone).